The primary structure comprises 316 residues: 4-hydroxyphenylacetate decarboxylase activating enzyme (316 aa).

The 288-residue stretch at 20–307 (HDGPGCRTTV…QDIFLDNGIA (288 aa)) folds into the Radical SAM core domain. [4Fe-4S] cluster contacts are provided by C34, C38, C41, C60, C66, C69, and C105. 40–42 (WCA) provides a ligand contact to S-adenosyl-L-methionine. The 4Fe-4S ferredoxin-type domain maps to 84–115 (NKPVIDWNICKDCESFECVNSCYYNAFKLCAK). S-adenosyl-L-methionine-binding positions include G144, 193 to 195 (DIK), and H267.

Belongs to the organic radical-activating enzymes family. Monomer. [4Fe-4S] cluster serves as cofactor.

It carries out the reaction glycyl-[protein] + reduced [flavodoxin] + S-adenosyl-L-methionine = glycin-2-yl radical-[protein] + semiquinone [flavodoxin] + 5'-deoxyadenosine + L-methionine + H(+). Functionally, catalyzes activation of 4-hydroxyphenylacetate decarboxylase under anaerobic conditions by generation of an organic free radical on a glycine residue, via a homolytic cleavage of S-adenosyl-L-methionine (SAM). This Clostridioides difficile (strain CD196) (Peptoclostridium difficile) protein is 4-hydroxyphenylacetate decarboxylase activating enzyme.